A 249-amino-acid polypeptide reads, in one-letter code: tRNA pseudouridine synthase A (249 aa).

Asp-52 acts as the Nucleophile in catalysis. Position 111 (Tyr-111) interacts with substrate.

The protein belongs to the tRNA pseudouridine synthase TruA family. Homodimer.

The enzyme catalyses uridine(38/39/40) in tRNA = pseudouridine(38/39/40) in tRNA. Formation of pseudouridine at positions 38, 39 and 40 in the anticodon stem and loop of transfer RNAs. The chain is tRNA pseudouridine synthase A from Caulobacter sp. (strain K31).